Reading from the N-terminus, the 130-residue chain is Small ribosomal subunit protein uS11 (130 aa).

It belongs to the universal ribosomal protein uS11 family. As to quaternary structure, part of the 30S ribosomal subunit. Interacts with proteins S7 and S18. Binds to IF-3.

Functionally, located on the platform of the 30S subunit, it bridges several disparate RNA helices of the 16S rRNA. Forms part of the Shine-Dalgarno cleft in the 70S ribosome. This chain is Small ribosomal subunit protein uS11, found in Aliarcobacter butzleri (strain RM4018) (Arcobacter butzleri).